The following is a 178-amino-acid chain: Probable coatomer subunit zeta-B (178 aa).

This sequence belongs to the adaptor complexes small subunit family. Oligomeric complex that consists of at least the alpha, beta, beta', gamma, delta, epsilon and zeta subunits.

Its subcellular location is the cytoplasm. The protein resides in the golgi apparatus membrane. It localises to the cytoplasmic vesicle. The protein localises to the COPI-coated vesicle membrane. Functionally, the coatomer is a cytosolic protein complex that binds to dilysine motifs and reversibly associates with Golgi non-clathrin-coated vesicles, which further mediate biosynthetic protein transport from the ER, via the Golgi up to the trans Golgi network. Coatomer complex is required for budding from Golgi membranes, and is essential for the retrograde Golgi-to-ER transport of dilysine-tagged proteins. The zeta subunit may be involved in regulating the coat assembly and, hence, the rate of biosynthetic protein transport due to its association-dissociation properties with the coatomer complex. This Dictyostelium discoideum (Social amoeba) protein is Probable coatomer subunit zeta-B (copZb).